The primary structure comprises 315 residues: Ornithine carbamoyltransferase (315 aa).

Carbamoyl phosphate-binding positions include 57–60 (STRT), Gln-84, Arg-108, and 135–138 (HPCQ). L-ornithine is bound by residues Asn-166, Asp-230, and 234 to 235 (SM). Carbamoyl phosphate is bound by residues 270 to 271 (CL) and Arg-298.

This sequence belongs to the aspartate/ornithine carbamoyltransferase superfamily. OTCase family.

The protein resides in the cytoplasm. The enzyme catalyses carbamoyl phosphate + L-ornithine = L-citrulline + phosphate + H(+). It functions in the pathway amino-acid biosynthesis; L-arginine biosynthesis; L-arginine from L-ornithine and carbamoyl phosphate: step 1/3. Its function is as follows. Reversibly catalyzes the transfer of the carbamoyl group from carbamoyl phosphate (CP) to the N(epsilon) atom of ornithine (ORN) to produce L-citrulline. The polypeptide is Ornithine carbamoyltransferase (Thermococcus kodakarensis (strain ATCC BAA-918 / JCM 12380 / KOD1) (Pyrococcus kodakaraensis (strain KOD1))).